The following is a 630-amino-acid chain: NUAK family SNF1-like kinase 2 (630 aa).

At Met1 the chain carries N-acetylmethionine. Residues 57 to 307 enclose the Protein kinase domain; that stretch reads YEFLETLGKG…LEDVASHWWV (251 aa). ATP contacts are provided by residues 63–71 and Lys85; that span reads LGKGTYGKV. The active-site Proton acceptor is Asp179. A Phosphothreonine modification is found at Thr212. Disordered regions lie at residues 361–504 and 521–566; these read HVPG…RLHR and GTAP…LDLP. A compositionally biased stretch (low complexity) spans 464–476; it reads SGYYSSPEPSESG. Phosphoserine occurs at positions 529, 550, 553, and 579.

It belongs to the protein kinase superfamily. CAMK Ser/Thr protein kinase family. SNF1 subfamily. Requires Mg(2+) as cofactor. Post-translationally, phosphorylated at Thr-212 by STK11/LKB1 in complex with STE20-related adapter-alpha (STRADA) pseudo kinase and CAB39. Autophosphorylation is also possible at Thr-212. Expressed in liver, skin, testis, uterus, ovary, adrenal gland and brain (at protein level). Expressed in kidney, heart, skin, spleen, lung, uterus, liver and the exocrine and endocrine compartments of the human pancreas. A kinase-inactive isoform also appears to be expressed in the skin, spleen, lung, uterus, liver and testis.

The catalysed reaction is L-seryl-[protein] + ATP = O-phospho-L-seryl-[protein] + ADP + H(+). It carries out the reaction L-threonyl-[protein] + ATP = O-phospho-L-threonyl-[protein] + ADP + H(+). Activated by phosphorylation on Thr-212 by STK11 in complex with STE20-related adapter-alpha (STRAD alpha) pseudo kinase and CAB39. Functionally, stress-activated kinase involved in tolerance to glucose starvation. Induces cell-cell detachment by increasing F-actin conversion to G-actin. Expression is induced by CD95 or TNF-alpha, via NF-kappa-B. Protects cells from CD95-mediated apoptosis and is required for the increased motility and invasiveness of CD95-activated tumor cells. Phosphorylates LATS1 and LATS2. Plays a key role in neural tube closure during embryonic development through LATS2 phosphorylation and regulation of the nuclear localization of YAP1 a critical downstream regulatory target in the Hippo signaling pathway. This chain is NUAK family SNF1-like kinase 2, found in Rattus norvegicus (Rat).